The sequence spans 80 residues: Protein YibX (80 aa).

In Escherichia coli (strain K12), this protein is Protein YibX.